We begin with the raw amino-acid sequence, 505 residues long: Deoxyguanosinetriphosphate triphosphohydrolase (505 aa).

The region spanning 66–273 (RLTHSMEVQQ…MEAADDISYC (208 aa)) is the HD domain.

It belongs to the dGTPase family. Type 1 subfamily. Homotetramer. It depends on Mg(2+) as a cofactor.

It catalyses the reaction dGTP + H2O = 2'-deoxyguanosine + triphosphate + H(+). Functionally, dGTPase preferentially hydrolyzes dGTP over the other canonical NTPs. This is Deoxyguanosinetriphosphate triphosphohydrolase from Salmonella choleraesuis (strain SC-B67).